The sequence spans 898 residues: Netrin receptor UNC5A (898 aa).

The signal sequence occupies residues 1 to 25; the sequence is MAVRPGLWPVLLGIVLAAWLRGSGA. The Extracellular segment spans residues 26–361; it reads QQSATVANPV…TASCPEDVAL (336 aa). Positions 44-141 constitute an Ig-like domain; it reads PHFLVEPEDV…SGTTKSQKAY (98 aa). 3 disulfides stabilise this stretch: Cys65–Cys126, Cys77–Cys124, and Cys170–Cys221. 2 N-linked (GlcNAc...) asparagine glycosylation sites follow: Asn107 and Asn218. Residues 155-238 enclose the Ig-like C2-type domain; it reads PLAKEVSLEQ…RRRSTSAAVI (84 aa). 2 consecutive TSP type-1 domains span residues 242–296 and 298–350; these read NGGW…TLCP and DGSW…DLCL. Residues Trp245, Trp248, and Trp251 are each glycosylated (C-linked (Man) tryptophan). 3 disulfides stabilise this stretch: Cys254-Cys291, Cys258-Cys295, and Cys269-Cys281. 2 C-linked (Man) tryptophan glycosylation sites follow: Trp301 and Trp304. 3 cysteine pairs are disulfide-bonded: Cys310/Cys344, Cys314/Cys349, and Cys322/Cys334. Asn343 carries N-linked (GlcNAc...) asparagine glycosylation. The helical transmembrane segment at 362 to 382 threads the bilayer; that stretch reads YIGLVAVAVCLFLLLLALGLI. Topologically, residues 383 to 898 are cytoplasmic; that stretch reads YCRKKEGLDS…GLFTVSEAEC (516 aa). Positions 497–640 constitute a ZU5 domain; that stretch reads NMAYGTFNFL…LGRFALVGEA (144 aa). An interaction with DCC region spans residues 661-679; sequence SLEYNIRVYCLHDTHDALK. Residues 817–897 form the Death domain; it reads QKIIASLDPP…AGLFTVSEAE (81 aa).

The protein belongs to the unc-5 family. Homodimer and homooligomer. Interacts with the cytoplasmic part of DCC. Interacts with MAGED1. Interacts with PRKCABP, possibly mediating some interaction with PKC. Interacts (via extracellular domain) with FLRT2 (via extracellular domain). Interacts (via extracellular domain) with FLRT3 (via extracellular domain). In terms of processing, phosphorylated on cytoplasmic tyrosine residues. Phosphorylated by PKC in vitro. Proteolytically cleaved by caspases during apoptosis. The cleavage does not take place when the receptor is associated with netrin ligand. Its cleavage by caspases is required to induce apoptosis. Post-translationally, the two extracellular TSRs of UNC5A contain WxxWxxWxxC motifs that can be C-mannosylated on all tryptophans. DPY19L1 preferentially mannosylates the first two tryptophans and DPY19L3 prefers the third. C-mannosylation by DPY19L1 is required for transport of UNC5A from the endoplasmic reticulum to the cell surface. In terms of tissue distribution, mainly expressed in regions of differentiating neurons. Expressed at early stages of neural tube development in the ventral spinal cord. In developing hindbrain, it colocalizes with a number of cranial motor neuron subpopulations from embryonic E11 to E14, while DCC is expressed by motor neurons at E12. Also expressed in non-neural structures, such as the basal plane of the hindbrain and midbrain, in the developing hypothalamus, thalamus and in the pallidum.

It is found in the cell membrane. The protein resides in the membrane raft. Its subcellular location is the cell projection. It localises to the neuron projection. Receptor for netrin required for axon guidance. Functions in the netrin signaling pathway and promotes neurite outgrowth in response to NTN1. Mediates axon repulsion of neuronal growth cones in the developing nervous system in response to netrin. Axon repulsion in growth cones may be mediated by its association with DCC that may trigger signaling for repulsion. It also acts as a dependence receptor required for apoptosis induction when not associated with netrin ligand. This is Netrin receptor UNC5A (Unc5a) from Rattus norvegicus (Rat).